Consider the following 299-residue polypeptide: MKPDAHQVKQFLLNLQDTICQQLTAVDGAEFVEDSWQREAGGGGRSRVLRNGGVFEQAGVNFSHVHGEAMPASATAHRPELAGRSFEAMGVSLVVHPHNPYVPTSHANVRFFIAEKPGAEPVWWFGGGFDLTPFYGFEEDAIHWHRTARDLCLPFGEDVYPRYKKWCDEYFYLKHRNEQRGIGGLFFDDLNTPDFDHCFAFMQAVGKGYTDAYLPIVERRKAMEYGEHERNFQLYRRGRYVEFNLVWDRGTLFGLQTGGRTESILMSMPPLVRWEYDYQPEAGSPEAALSEFIKVRDWV.

Residue serine 92 coordinates substrate. Mn(2+) contacts are provided by histidine 96 and histidine 106. The active-site Proton donor is the histidine 106. A substrate-binding site is contributed by 108 to 110; that stretch reads NVR. Mn(2+) is bound by residues histidine 145 and histidine 175. The segment at 240–275 is important for dimerization; that stretch reads YVEFNLVWDRGTLFGLQTGGRTESILMSMPPLVRWE. Position 258 to 260 (258 to 260) interacts with substrate; the sequence is GGR.

This sequence belongs to the aerobic coproporphyrinogen-III oxidase family. In terms of assembly, homodimer. The cofactor is Mn(2+).

It is found in the cytoplasm. The catalysed reaction is coproporphyrinogen III + O2 + 2 H(+) = protoporphyrinogen IX + 2 CO2 + 2 H2O. It functions in the pathway porphyrin-containing compound metabolism; protoporphyrin-IX biosynthesis; protoporphyrinogen-IX from coproporphyrinogen-III (O2 route): step 1/1. In terms of biological role, involved in the heme biosynthesis. Catalyzes the aerobic oxidative decarboxylation of propionate groups of rings A and B of coproporphyrinogen-III to yield the vinyl groups in protoporphyrinogen-IX. The polypeptide is Oxygen-dependent coproporphyrinogen-III oxidase (Escherichia fergusonii (strain ATCC 35469 / DSM 13698 / CCUG 18766 / IAM 14443 / JCM 21226 / LMG 7866 / NBRC 102419 / NCTC 12128 / CDC 0568-73)).